A 220-amino-acid polypeptide reads, in one-letter code: Uracil-DNA glycosylase 2 (220 aa).

Catalysis depends on Asp65, which acts as the Proton acceptor.

It belongs to the uracil-DNA glycosylase (UDG) superfamily. UNG family.

The protein localises to the cytoplasm. The enzyme catalyses Hydrolyzes single-stranded DNA or mismatched double-stranded DNA and polynucleotides, releasing free uracil.. Functionally, excises uracil residues from the DNA which can arise as a result of misincorporation of dUMP residues by DNA polymerase or due to deamination of cytosine. This is Uracil-DNA glycosylase 2 from Bacteroides fragilis (strain ATCC 25285 / DSM 2151 / CCUG 4856 / JCM 11019 / LMG 10263 / NCTC 9343 / Onslow / VPI 2553 / EN-2).